We begin with the raw amino-acid sequence, 497 residues long: Methionine--tRNA ligase (497 aa).

A 'HIGH' region motif is present at residues 14-24; the sequence is YYVNDVPHLGH. The Zn(2+) site is built by Cys-129, Cys-132, Cys-147, and His-150. The 'KMSKS' region motif lies at 295–299; the sequence is KMSKT. Lys-298 lines the ATP pocket.

The protein belongs to the class-I aminoacyl-tRNA synthetase family. MetG type 2A subfamily. Monomer. It depends on Zn(2+) as a cofactor.

The protein localises to the cytoplasm. It carries out the reaction tRNA(Met) + L-methionine + ATP = L-methionyl-tRNA(Met) + AMP + diphosphate. In terms of biological role, is required not only for elongation of protein synthesis but also for the initiation of all mRNA translation through initiator tRNA(fMet) aminoacylation. In Aquifex aeolicus (strain VF5), this protein is Methionine--tRNA ligase (metG).